A 266-amino-acid chain; its full sequence is L-aspartate dehydrogenase (266 aa).

NAD(+) contacts are provided by Ala-123 and Asn-189. His-219 is a catalytic residue.

The protein belongs to the L-aspartate dehydrogenase family.

It catalyses the reaction L-aspartate + NADP(+) + H2O = oxaloacetate + NH4(+) + NADPH + H(+). The catalysed reaction is L-aspartate + NAD(+) + H2O = oxaloacetate + NH4(+) + NADH + H(+). It participates in cofactor biosynthesis; NAD(+) biosynthesis; iminoaspartate from L-aspartate (dehydrogenase route): step 1/1. In terms of biological role, specifically catalyzes the NAD or NADP-dependent dehydrogenation of L-aspartate to iminoaspartate. The sequence is that of L-aspartate dehydrogenase from Cupriavidus necator (strain ATCC 17699 / DSM 428 / KCTC 22496 / NCIMB 10442 / H16 / Stanier 337) (Ralstonia eutropha).